Consider the following 459-residue polypeptide: Cysteine--tRNA ligase (459 aa).

A Zn(2+)-binding site is contributed by cysteine 28. The short motif at 30 to 40 (VTIYDLCHIGH) is the 'HIGH' region element. 3 residues coordinate Zn(2+): cysteine 209, histidine 234, and glutamate 238. Positions 266 to 270 (KMSKS) match the 'KMSKS' region motif. Residue lysine 269 participates in ATP binding.

This sequence belongs to the class-I aminoacyl-tRNA synthetase family. In terms of assembly, monomer. The cofactor is Zn(2+).

The protein resides in the cytoplasm. It catalyses the reaction tRNA(Cys) + L-cysteine + ATP = L-cysteinyl-tRNA(Cys) + AMP + diphosphate. In Shewanella baltica (strain OS195), this protein is Cysteine--tRNA ligase.